The following is a 431-amino-acid chain: Chaperone SurA (431 aa).

A signal peptide spans 1-20 (MKNWRTLILGLALSASTAFA). PpiC domains lie at 171-272 (NDEL…KVND) and 282-382 (VTET…QLLD).

The protein resides in the periplasm. It catalyses the reaction [protein]-peptidylproline (omega=180) = [protein]-peptidylproline (omega=0). Chaperone involved in the correct folding and assembly of outer membrane proteins. Recognizes specific patterns of aromatic residues and the orientation of their side chains, which are found more frequently in integral outer membrane proteins. May act in both early periplasmic and late outer membrane-associated steps of protein maturation. The protein is Chaperone SurA of Pectobacterium atrosepticum (strain SCRI 1043 / ATCC BAA-672) (Erwinia carotovora subsp. atroseptica).